Consider the following 257-residue polypeptide: Global transcriptional regulator CodY (257 aa).

The GAF domain stretch occupies residues 1-155 (MSLLSKTREL…AATVIGMEIL (155 aa)). The segment at residues 203–222 (ASKVADRVGITRSVIVNALR) is a DNA-binding region (H-T-H motif).

This sequence belongs to the CodY family.

The protein resides in the cytoplasm. Functionally, DNA-binding global transcriptional regulator which is involved in the adaptive response to starvation and acts by directly or indirectly controlling the expression of numerous genes in response to nutrient availability. During rapid exponential growth, CodY is highly active and represses genes whose products allow adaptation to nutrient depletion. The sequence is that of Global transcriptional regulator CodY from Staphylococcus epidermidis (strain ATCC 12228 / FDA PCI 1200).